A 4592-amino-acid polypeptide reads, in one-letter code: Intermembrane lipid transfer protein vps13D (4592 aa).

The Chorein N-terminal domain maps to 3–102 (FESVVAEVID…SSTNVSSNYS (100 aa)). 13 disordered regions span residues 95–142 (TNVS…TASQ), 157–199 (LDKK…IDSQ), 286–307 (STTS…SSSS), 445–529 (KKDD…IKGI), 574–605 (SNST…LSPM), 826–861 (NYNN…QQGI), 1040–1083 (TTSP…KRQW), 1219–1249 (YFKN…EKKP), 1655–1717 (QQQE…QQSN), 1855–1886 (SNNN…NSLF), 1971–2001 (TSSL…TTTS), 2025–2056 (PLIN…EQQQ), and 2245–2270 (NNNN…NIIN). Composition is skewed to low complexity over residues 117–139 (SSSN…TTST) and 172–199 (KSTN…IDSQ). A coiled-coil region spans residues 437–517 (KNATIKLNKK…KKKEEKGKSK (81 aa)). Basic and acidic residues predominate over residues 445-457 (KKDDKKDDKKDDI). Residues 458 to 474 (NSSSSSIGSSNSSNNTP) are compositionally biased toward low complexity. Over residues 475-529 (TKDKNKEKEKDKEKEKEKEKKKEKEKLKLEEKKKKKEEKGKSKSKDSKKNKIKGI) the composition is skewed to basic and acidic residues. The span at 574–591 (SNSTTTNNSNNNSSSSPN) shows a compositional bias: low complexity. The segment covering 592–603 (ILATSPSNNSLS) has biased composition (polar residues). Residues 829 to 838 (NQSSSSSSSS) show a composition bias toward low complexity. Residues 1040–1059 (TTSPTFNSLNNKPSTLQNNH) show a composition bias toward polar residues. Over residues 1064-1076 (NGNSSNNNNTDSP) the composition is skewed to low complexity. Residues 1234 to 1244 (NTEDDEQEEEE) show a composition bias toward acidic residues. Composition is skewed to low complexity over residues 1669 to 1689 (KSIN…LRKS) and 1702 to 1715 (QQQQ…QQQQ). Over residues 2037-2048 (SKSSSSKSSSSK) the composition is skewed to low complexity. Residues 2321–2354 (TLQINDLGANIISIGNKSTSIKCFLRSIRLSDSR) form a TPR 1 repeat. 7 disordered regions span residues 2456 to 2489 (KTNN…SIST), 2862 to 2882 (AVST…NNNG), 3006 to 3035 (GEQK…SSSS), 3106 to 3129 (NSSG…SSSN), 3356 to 3384 (KLPT…KRTT), 3560 to 3580 (NSLK…HRHN), and 3630 to 3679 (STNH…SKLK). Low complexity-rich tracts occupy residues 2458–2478 (NNNN…NNNN), 2864–2880 (STSN…SNNN), and 3015–3035 (TSTS…SSSS). A compositionally biased stretch (low complexity) spans 3358–3384 (PTSPQTSSSSSPPPATTTTSTTTKRTT). The segment covering 3569–3580 (KSKKQQQQHRHN) has biased composition (basic residues). The segment covering 3640-3679 (SSTFNNSSNDNINNGNSNNNTSNSLSPPSSSSSINLSKLK) has biased composition (low complexity). The stretch at 3789–3822 (EVPKPYLGRVDIKDNDTHTSIHFYDQDTEYSPFR) is one TPR 2 repeat. 2 stretches are compositionally biased toward low complexity: residues 3872-3894 (TTTT…NNNN) and 4111-4135 (QQLQ…NPIN). Disordered regions lie at residues 3872 to 3897 (TTTT…NQYI) and 4105 to 4135 (KKHK…NPIN).

The protein localises to the membrane. Functionally, mediates the transfer of lipids between membranes at organelle contact sites. The sequence is that of Intermembrane lipid transfer protein vps13D (vps13D) from Dictyostelium discoideum (Social amoeba).